The chain runs to 230 residues: Demethylmenaquinone methyltransferase (230 aa).

S-adenosyl-L-methionine is bound by residues threonine 62, aspartate 80, 100–101 (DA), and serine 117.

The protein belongs to the class I-like SAM-binding methyltransferase superfamily. MenG/UbiE family.

It carries out the reaction a 2-demethylmenaquinol + S-adenosyl-L-methionine = a menaquinol + S-adenosyl-L-homocysteine + H(+). It functions in the pathway quinol/quinone metabolism; menaquinone biosynthesis; menaquinol from 1,4-dihydroxy-2-naphthoate: step 2/2. Its function is as follows. Methyltransferase required for the conversion of demethylmenaquinol (DMKH2) to menaquinol (MKH2). This Mycobacterium sp. (strain JLS) protein is Demethylmenaquinone methyltransferase.